Consider the following 215-residue polypeptide: Probable transaldolase (215 aa).

Catalysis depends on Lys83, which acts as the Schiff-base intermediate with substrate.

It belongs to the transaldolase family. Type 3B subfamily.

It localises to the cytoplasm. It catalyses the reaction D-sedoheptulose 7-phosphate + D-glyceraldehyde 3-phosphate = D-erythrose 4-phosphate + beta-D-fructose 6-phosphate. Its pathway is carbohydrate degradation; pentose phosphate pathway; D-glyceraldehyde 3-phosphate and beta-D-fructose 6-phosphate from D-ribose 5-phosphate and D-xylulose 5-phosphate (non-oxidative stage): step 2/3. Functionally, transaldolase is important for the balance of metabolites in the pentose-phosphate pathway. The protein is Probable transaldolase of Methanococcus maripaludis (strain C6 / ATCC BAA-1332).